The sequence spans 776 residues: MNTKILKALEFDKVKKQFTHFLQSEQGQMELNDLLPMTNQEKIERSFAEIADVAQIFQEYASFGFGHSQDISESLRRLELGADLNTQELLAVKRILQMSAELKDFYDNLENVDLQILDCLFEKIETFPDLQGSLQAINDGGFIEDFASPELTKIRHHIHQNEQQIRQILQEMLKKQGDLLAENLIASRSGRSVLPVKNTYRHRIAGVIHDISASGNTVYIEPRAVVNLNEEMTQARADERHEMTRILHDLSDRLRSQTDIIGNNAWLLGHIDFVRGKYLYMRENQASLPSLTTDQTIRLLSVRHPLLSNPIANDLHFEHDTTAILITGPNTGGKTIMLKTLGITQLMAQSGLPILADEGSKVAVFKDIFADIGDEQSIEQSLSTFSSHMTHIVEILQKANKDSLVLFDELGAGTDPQEGAALAMSILEHLRLSDIKTMITTHYPELKAYGIETEFIENASMEFDMVTLSPTYHFMQGVPGRSNAFEIARRLGLSEIIVAEAENLTNTDSDVNKIIERLENQTIESRRRLDNIREVEQENLKFNRAVKKLYNEFSHAQDKELRKAKLKAQEIVDKALAESDFILKNLQDKAQLKPHEIIEAKGKLKKLVPEIELSKNKVLKKAKKKRAAKVGDDIIVSSYGQRGTLTKRFKDGRWEAQVGLIKMTLQESEFDLVKSDKAQASQKRQAHLVKRTSQKAPSARLDLRGKRYEEAMQELDEFIDQALLNNMAQVDIIHGIGTGVIRDGVTKYLRRNKQVKEFGYAPQNAGGSGATIVTFK.

ATP is bound at residue 328–335; it reads GPNTGGKT. Residues 701 to 776 enclose the Smr domain; sequence LDLRGKRYEE…GSGATIVTFK (76 aa).

This sequence belongs to the DNA mismatch repair MutS family. MutS2 subfamily. In terms of assembly, homodimer. Binds to stalled ribosomes, contacting rRNA.

Endonuclease that is involved in the suppression of homologous recombination and thus may have a key role in the control of bacterial genetic diversity. Functionally, acts as a ribosome collision sensor, splitting the ribosome into its 2 subunits. Detects stalled/collided 70S ribosomes which it binds and splits by an ATP-hydrolysis driven conformational change. Acts upstream of the ribosome quality control system (RQC), a ribosome-associated complex that mediates the extraction of incompletely synthesized nascent chains from stalled ribosomes and their subsequent degradation. Probably generates substrates for RQC. The chain is Endonuclease MutS2 from Streptococcus mutans serotype c (strain ATCC 700610 / UA159).